Consider the following 1290-residue polypeptide: 1-phosphatidylinositol 4,5-bisphosphate phosphodiesterase gamma-1 (1290 aa).

An N-acetylalanine modification is found at Ala-2. The region spanning 27-142 is the PH 1 domain; the sequence is RSLEVGTVMT…WIKGLTWLME (116 aa). The EF-hand domain maps to 152-187; it reads QIERWLRKQFYSVDRNREDRISAKDLKNMLSQVNYR. The Ca(2+) site is built by Asp-165, Asn-167, Glu-169, Arg-171, and Asp-176. The PI-PLC X-box domain occupies 320-464; that stretch reads DTMNNPLSHY…LKRKILIKHK (145 aa). Active-site residues include His-335 and His-380. The PH 2; first part domain maps to 489–523; it reads SIKNGILYLEDPVNHEWYPHYFVLTSSKIYYSEET. Tyr-506 is modified (phosphotyrosine). Residues 522–544 form a disordered region; the sequence is ETSSDQGNEDEEEPKEVSSSTEL. 2 SH2 domains span residues 550–657 and 668–756; these read WFHG…SEPV and WYHA…RYPI. Position 771 is a phosphotyrosine; by SYK (Tyr-771). Tyr-775 is subject to Phosphotyrosine. At Tyr-783 the chain carries Phosphotyrosine; by ITK, SYK and TXK. An SH3 domain is found at 791-851; sequence TFKCAVKALF…PSNYVEEMVN (61 aa). One can recognise a PH 2; second part domain in the interval 895 to 931; it reads FVFSISMASVAHWSLDVAADSQEELQDWVKKIREVAQ. The region spanning 953-1070 is the PI-PLC Y-box domain; it reads LSELVVYCRP…GYVLQPSTMR (118 aa). Tyr-977 is modified (phosphotyrosine). Residues 1071–1194 enclose the C2 domain; the sequence is DEAFDPFDKS…TGYRAVPLKN (124 aa). Ser-1221, Pro-1222, Ser-1227, Ser-1233, and Ser-1248 each carry phosphoserine. The residue at position 1253 (Tyr-1253) is a Phosphotyrosine. The residue at position 1263 (Ser-1263) is a Phosphoserine. Positions 1271 to 1290 are disordered; that stretch reads FDSRERRAPRRTRVNGDNRL.

Interacts with AGAP2 via its SH3 domain. Interacts (via SH2 domain) with RET. Interacts with FLT1 (tyrosine-phosphorylated). Interacts (via SH2 domain) with FGFR1, FGFR2, FGFR3 and FGFR4 (phosphorylated). Interacts with LAT (phosphorylated) upon TCR activation. Interacts (via SH3 domain) with the Pro-rich domain of TNK1. Associates with BLNK, VAV1, GRB2 and NCK1 in a B-cell antigen receptor-dependent fashion. Interacts with CBLB in activated T-cells; which inhibits phosphorylation. Interacts with SHB. Interacts (via SH3 domain) with the Arg/Gly-rich-flanked Pro-rich domains of KHDRBS1/SAM68. This interaction is selectively regulated by arginine methylation of KHDRBS1/SAM68. Interacts with INPP5D/SHIP1, THEMIS and CLNK. Interacts with AXL, FLT4 and KIT. Interacts with RALGPS1. Interacts (via the SH2 domains) with VIL1 (phosphorylated at C-terminus tyrosine phosphorylation sites). Interacts (via SH2 domain) with PDGFRA and PDGFRB (tyrosine phosphorylated). Interacts with PIP5K1C. Interacts with NTRK1 and NTRK2 (phosphorylated upon ligand-binding). Interacts with SYK; activates PLCG1. Interacts with GRB2, LAT and THEMIS upon TCR activation in thymocytes. Interacts with TESPA1; the association is increased with prolonged stimulation of the TCR and may facilitate the assembly of the LAT signalosome. Interacts (via C-terminal proline-rich domain (PRD)) with PLCG1 (via SH3 domain); this interaction leads to guanine nucleotide exchange from PlCG1 to DNM1 and enhances DNM1-dependent endocytosis. As to quaternary structure, (Microbial infection) Interacts (via SH3 domain) with HEV ORF3 protein. It depends on Ca(2+) as a cofactor. In terms of processing, tyrosine phosphorylated in response to signaling via activated FLT3, KIT and PDGFRA. Tyrosine phosphorylated by activated FGFR1, FGFR2, FGFR3 and FGFR4. Tyrosine phosphorylated by activated FLT1 and KDR. Tyrosine phosphorylated by activated PDGFRB. The receptor-mediated activation of PLCG1 involves its phosphorylation by tyrosine kinases, in response to ligation of a variety of growth factor receptors and immune system receptors. For instance, SYK phosphorylates and activates PLCG1 in response to ligation of the B-cell receptor. May be dephosphorylated by PTPRJ. Phosphorylated by ITK and TXK on Tyr-783 upon TCR activation in T-cells. Post-translationally, ubiquitinated by CBLB in activated T-cells.

It is found in the cell projection. Its subcellular location is the lamellipodium. The protein resides in the ruffle. The enzyme catalyses a 1,2-diacyl-sn-glycero-3-phospho-(1D-myo-inositol-4,5-bisphosphate) + H2O = 1D-myo-inositol 1,4,5-trisphosphate + a 1,2-diacyl-sn-glycerol + H(+). The catalysed reaction is a 1,2-diacyl-sn-glycero-3-phospho-(1D-myo-inositol) + H2O = 1D-myo-inositol 1-phosphate + a 1,2-diacyl-sn-glycerol + H(+). With respect to regulation, activated by phosphorylation on tyrosine residues. Its function is as follows. Mediates the production of the second messenger molecules diacylglycerol (DAG) and inositol 1,4,5-trisphosphate (IP3). Plays an important role in the regulation of intracellular signaling cascades. Becomes activated in response to ligand-mediated activation of receptor-type tyrosine kinases, such as PDGFRA, PDGFRB, EGFR, FGFR1, FGFR2, FGFR3 and FGFR4. Plays a role in actin reorganization and cell migration. Guanine nucleotide exchange factor that binds the GTPase DNM1 and catalyzes the dissociation of GDP, allowing a GTP molecule to bind in its place, therefore enhancing DNM1-dependent endocytosis. This Homo sapiens (Human) protein is 1-phosphatidylinositol 4,5-bisphosphate phosphodiesterase gamma-1.